Consider the following 2202-residue polypeptide: Activating signal cointegrator 1 complex subunit 3 (2202 aa).

The tract at residues 1–400 (MALPRLTGAL…RQRDADVEKI (400 aa)) is required for interaction with ASCC2. The residue at position 12 (Ser-12) is a Phosphoserine. Coiled-coil stretches lie at residues 18-79 (KQDN…AAKQ) and 328-356 (IQSE…KAGE). Residues 486–669 (ETAYNTNENM…FLHVNPYIGL (184 aa)) enclose the Helicase ATP-binding 1 domain. Position 499–506 (499–506 (APTGAGKT)) interacts with ATP. At Lys-572 the chain carries N6-acetyllysine. The short motif at 611–614 (DEVH) is the DEVH box element. Residues 728–914 (TVRTAMSLIE…GTVTNVEEAV (187 aa)) enclose the Helicase C-terminal 1 domain. Positions 978 to 1287 (STDLGRTASH…GAEAVCIINF (310 aa)) constitute an SEC63 1 domain. The 176-residue stretch at 1336–1511 (HTLYHTDCNV…WLNIKQMGLF (176 aa)) folds into the Helicase ATP-binding 2 domain. Position 1349-1356 (1349-1356 (APTGSGKT)) interacts with ATP. A DEIH box motif is present at residues 1453-1456 (DEIH). Residues 1544 to 1739 (PAFQAIRSHS…VLSDHLNAEI (196 aa)) enclose the Helicase C-terminal 2 domain. In terms of domain architecture, SEC63 2 spans 1812-2176 (PLTYGRIASY…LGLDQQYDIY (365 aa)). Position 2195 is a phosphoserine (Ser-2195).

It belongs to the helicase family. As to quaternary structure, identified in the ASCC complex that contains ASCC1, ASCC2 and ASCC3. Functions as scaffolding subunit that interacts directly with both ASCC1 and ASCC2. Interacts directly with ALKBH3, and thereby recruits ALKBH3 to the ASCC complex. Part of the ASC-1/TRIP4 complex, that contains TRIP4, ASCC1, ASCC2 and ASCC3. Part of the RQT (ribosome quality control trigger) complex, that contains ASCC2, ASCC3 and TRIP4. Associates with ribosomes; recruited to collided ribosomes. Interacts with ZCCHC4. Interacts with ZNF598. Interacts with RPS3. Ubiquitous.

The protein localises to the nucleus. The protein resides in the nucleus speckle. It is found in the cytoplasm. Its subcellular location is the cytosol. The catalysed reaction is Couples ATP hydrolysis with the unwinding of duplex DNA by translocating in the 3'-5' direction.. It carries out the reaction ATP + H2O = ADP + phosphate + H(+). Its function is as follows. ATPase involved both in DNA repair and rescue of stalled ribosomes. 3'-5' DNA helicase involved in repair of alkylated DNA: promotes DNA unwinding to generate single-stranded substrate needed for ALKBH3, enabling ALKBH3 to process alkylated N3-methylcytosine (3mC) within double-stranded regions. Also involved in activation of the ribosome quality control (RQC) pathway, a pathway that degrades nascent peptide chains during problematic translation. Drives the splitting of stalled ribosomes that are ubiquitinated in a ZNF598-dependent manner, as part of the ribosome quality control trigger (RQT) complex. Part of the ASC-1 complex that enhances NF-kappa-B, SRF and AP1 transactivation. The polypeptide is Activating signal cointegrator 1 complex subunit 3 (ASCC3) (Homo sapiens (Human)).